A 194-amino-acid polypeptide reads, in one-letter code: Crossover junction endodeoxyribonuclease RuvC (194 aa).

Residues aspartate 7, glutamate 68, and aspartate 141 contribute to the active site. Residues aspartate 7, glutamate 68, and aspartate 141 each coordinate Mg(2+).

This sequence belongs to the RuvC family. As to quaternary structure, homodimer which binds Holliday junction (HJ) DNA. The HJ becomes 2-fold symmetrical on binding to RuvC with unstacked arms; it has a different conformation from HJ DNA in complex with RuvA. In the full resolvosome a probable DNA-RuvA(4)-RuvB(12)-RuvC(2) complex forms which resolves the HJ. It depends on Mg(2+) as a cofactor.

It localises to the cytoplasm. The catalysed reaction is Endonucleolytic cleavage at a junction such as a reciprocal single-stranded crossover between two homologous DNA duplexes (Holliday junction).. Its function is as follows. The RuvA-RuvB-RuvC complex processes Holliday junction (HJ) DNA during genetic recombination and DNA repair. Endonuclease that resolves HJ intermediates. Cleaves cruciform DNA by making single-stranded nicks across the HJ at symmetrical positions within the homologous arms, yielding a 5'-phosphate and a 3'-hydroxyl group; requires a central core of homology in the junction. The consensus cleavage sequence is 5'-(A/T)TT(C/G)-3'. Cleavage occurs on the 3'-side of the TT dinucleotide at the point of strand exchange. HJ branch migration catalyzed by RuvA-RuvB allows RuvC to scan DNA until it finds its consensus sequence, where it cleaves and resolves the cruciform DNA. This Mycolicibacterium vanbaalenii (strain DSM 7251 / JCM 13017 / BCRC 16820 / KCTC 9966 / NRRL B-24157 / PYR-1) (Mycobacterium vanbaalenii) protein is Crossover junction endodeoxyribonuclease RuvC.